Reading from the N-terminus, the 284-residue chain is 2-dehydro-3-deoxyphosphooctonate aldolase (284 aa).

This sequence belongs to the KdsA family.

The protein localises to the cytoplasm. The enzyme catalyses D-arabinose 5-phosphate + phosphoenolpyruvate + H2O = 3-deoxy-alpha-D-manno-2-octulosonate-8-phosphate + phosphate. It participates in carbohydrate biosynthesis; 3-deoxy-D-manno-octulosonate biosynthesis; 3-deoxy-D-manno-octulosonate from D-ribulose 5-phosphate: step 2/3. The protein operates within bacterial outer membrane biogenesis; lipopolysaccharide biosynthesis. This chain is 2-dehydro-3-deoxyphosphooctonate aldolase, found in Yersinia pseudotuberculosis serotype O:1b (strain IP 31758).